Reading from the N-terminus, the 345-residue chain is S-adenosylmethionine:tRNA ribosyltransferase-isomerase (345 aa).

Belongs to the QueA family. Monomer.

It is found in the cytoplasm. It carries out the reaction 7-aminomethyl-7-carbaguanosine(34) in tRNA + S-adenosyl-L-methionine = epoxyqueuosine(34) in tRNA + adenine + L-methionine + 2 H(+). It participates in tRNA modification; tRNA-queuosine biosynthesis. In terms of biological role, transfers and isomerizes the ribose moiety from AdoMet to the 7-aminomethyl group of 7-deazaguanine (preQ1-tRNA) to give epoxyqueuosine (oQ-tRNA). This is S-adenosylmethionine:tRNA ribosyltransferase-isomerase from Thermodesulfovibrio yellowstonii (strain ATCC 51303 / DSM 11347 / YP87).